A 156-amino-acid chain; its full sequence is Cytochrome c-type biogenesis protein CcmE (156 aa).

Over 1–8 (MNPLRRKR) the chain is Cytoplasmic. Residues 9–29 (LLIILAILAGVGIAVGLAMSA) form a helical; Signal-anchor for type II membrane protein membrane-spanning segment. The Periplasmic portion of the chain corresponds to 30–156 (LRENINLFYT…RIRSLPRRAK (127 aa)). Heme-binding residues include His124 and Tyr128.

The protein belongs to the CcmE/CycJ family.

Its subcellular location is the cell inner membrane. Its function is as follows. Heme chaperone required for the biogenesis of c-type cytochromes. Transiently binds heme delivered by CcmC and transfers the heme to apo-cytochromes in a process facilitated by CcmF and CcmH. The polypeptide is Cytochrome c-type biogenesis protein CcmE (Pseudomonas fluorescens).